A 253-amino-acid chain; its full sequence is Ubiquinone biosynthesis O-methyltransferase (253 aa).

S-adenosyl-L-methionine is bound by residues Arg-41, Gly-72, Asp-93, and Leu-136.

It belongs to the methyltransferase superfamily. UbiG/COQ3 family.

It catalyses the reaction a 3-demethylubiquinol + S-adenosyl-L-methionine = a ubiquinol + S-adenosyl-L-homocysteine + H(+). The catalysed reaction is a 3-(all-trans-polyprenyl)benzene-1,2-diol + S-adenosyl-L-methionine = a 2-methoxy-6-(all-trans-polyprenyl)phenol + S-adenosyl-L-homocysteine + H(+). It participates in cofactor biosynthesis; ubiquinone biosynthesis. In terms of biological role, O-methyltransferase that catalyzes the 2 O-methylation steps in the ubiquinone biosynthetic pathway. This is Ubiquinone biosynthesis O-methyltransferase from Azorhizobium caulinodans (strain ATCC 43989 / DSM 5975 / JCM 20966 / LMG 6465 / NBRC 14845 / NCIMB 13405 / ORS 571).